We begin with the raw amino-acid sequence, 378 residues long: Peptide chain release factor RF2 (378 aa).

Gln253 bears the N5-methylglutamine mark.

It belongs to the prokaryotic/mitochondrial release factor family. Interacts with the ribosome. Interacts with ribosomal protein L11. Recruited to stalled E.coli ribosomes by E.coli ArfA.

The protein resides in the cytoplasm. In terms of biological role, peptide chain release factor 2 directs the termination of translation in response to the peptide chain termination codons UGA and UAA. In endogenous ribosomes interacts with P-site tRNA and 23S rRNA. In the presence of truncated mRNA in the 70S ribosome, ArfA and RF2 interact such that the GGQ peptide hydrolysis motif of RF2 rises into the peptidyl-transferase center and releases the ribosome. Recruited to stalled E.coli 70S ribosomes by E.coli ArfA, but cannot be functionally accomodated in the peptidyl-transferase center. Note T.thermophilus probably does not encode arfA. The polypeptide is Peptide chain release factor RF2 (prfB) (Thermus thermophilus (strain ATCC 27634 / DSM 579 / HB8)).